Reading from the N-terminus, the 289-residue chain is 4-diphosphocytidyl-2-C-methyl-D-erythritol kinase (289 aa).

Residue Lys11 is part of the active site. 93 to 103 serves as a coordination point for ATP; that stretch reads PLAAGLAGGSA. Asp135 is a catalytic residue.

The protein belongs to the GHMP kinase family. IspE subfamily.

It carries out the reaction 4-CDP-2-C-methyl-D-erythritol + ATP = 4-CDP-2-C-methyl-D-erythritol 2-phosphate + ADP + H(+). The protein operates within isoprenoid biosynthesis; isopentenyl diphosphate biosynthesis via DXP pathway; isopentenyl diphosphate from 1-deoxy-D-xylulose 5-phosphate: step 3/6. Functionally, catalyzes the phosphorylation of the position 2 hydroxy group of 4-diphosphocytidyl-2C-methyl-D-erythritol. This Thermoanaerobacter sp. (strain X514) protein is 4-diphosphocytidyl-2-C-methyl-D-erythritol kinase.